Reading from the N-terminus, the 379-residue chain is UDP-4-amino-4-deoxy-L-arabinose--oxoglutarate aminotransferase (379 aa).

Lys-182 is modified (N6-(pyridoxal phosphate)lysine).

Belongs to the DegT/DnrJ/EryC1 family. ArnB subfamily. As to quaternary structure, homodimer. It depends on pyridoxal 5'-phosphate as a cofactor.

It catalyses the reaction UDP-4-amino-4-deoxy-beta-L-arabinose + 2-oxoglutarate = UDP-beta-L-threo-pentopyranos-4-ulose + L-glutamate. It functions in the pathway nucleotide-sugar biosynthesis; UDP-4-deoxy-4-formamido-beta-L-arabinose biosynthesis; UDP-4-deoxy-4-formamido-beta-L-arabinose from UDP-alpha-D-glucuronate: step 2/3. Its pathway is bacterial outer membrane biogenesis; lipopolysaccharide biosynthesis. Its function is as follows. Catalyzes the conversion of UDP-4-keto-arabinose (UDP-Ara4O) to UDP-4-amino-4-deoxy-L-arabinose (UDP-L-Ara4N). The modified arabinose is attached to lipid A and is required for resistance to polymyxin and cationic antimicrobial peptides. This is UDP-4-amino-4-deoxy-L-arabinose--oxoglutarate aminotransferase from Salmonella schwarzengrund (strain CVM19633).